A 165-amino-acid chain; its full sequence is Large ribosomal subunit protein uL10 (165 aa).

Belongs to the universal ribosomal protein uL10 family. In terms of assembly, part of the ribosomal stalk of the 50S ribosomal subunit. The N-terminus interacts with L11 and the large rRNA to form the base of the stalk. The C-terminus forms an elongated spine to which L12 dimers bind in a sequential fashion forming a multimeric L10(L12)X complex.

In terms of biological role, forms part of the ribosomal stalk, playing a central role in the interaction of the ribosome with GTP-bound translation factors. This Serratia proteamaculans (strain 568) protein is Large ribosomal subunit protein uL10.